The following is a 100-amino-acid chain: NADH-quinone oxidoreductase subunit K (100 aa).

3 consecutive transmembrane segments (helical) span residues 4 to 24 (LQHG…GLLI), 28 to 48 (LLFM…AFVV), and 60 to 80 (VMYI…LALL).

The protein belongs to the complex I subunit 4L family. NDH-1 is composed of 13 different subunits. Subunits NuoA, H, J, K, L, M, N constitute the membrane sector of the complex.

It is found in the cell inner membrane. The catalysed reaction is a quinone + NADH + 5 H(+)(in) = a quinol + NAD(+) + 4 H(+)(out). In terms of biological role, NDH-1 shuttles electrons from NADH, via FMN and iron-sulfur (Fe-S) centers, to quinones in the respiratory chain. The immediate electron acceptor for the enzyme in this species is believed to be ubiquinone. Couples the redox reaction to proton translocation (for every two electrons transferred, four hydrogen ions are translocated across the cytoplasmic membrane), and thus conserves the redox energy in a proton gradient. In Yersinia pseudotuberculosis serotype O:1b (strain IP 31758), this protein is NADH-quinone oxidoreductase subunit K.